The primary structure comprises 393 residues: NAD(P)H-quinone oxidoreductase subunit H, chloroplastic (393 aa).

It belongs to the complex I 49 kDa subunit family. As to quaternary structure, NDH is composed of at least 16 different subunits, 5 of which are encoded in the nucleus.

Its subcellular location is the plastid. The protein resides in the chloroplast thylakoid membrane. The catalysed reaction is a plastoquinone + NADH + (n+1) H(+)(in) = a plastoquinol + NAD(+) + n H(+)(out). It carries out the reaction a plastoquinone + NADPH + (n+1) H(+)(in) = a plastoquinol + NADP(+) + n H(+)(out). Its function is as follows. NDH shuttles electrons from NAD(P)H:plastoquinone, via FMN and iron-sulfur (Fe-S) centers, to quinones in the photosynthetic chain and possibly in a chloroplast respiratory chain. The immediate electron acceptor for the enzyme in this species is believed to be plastoquinone. Couples the redox reaction to proton translocation, and thus conserves the redox energy in a proton gradient. The chain is NAD(P)H-quinone oxidoreductase subunit H, chloroplastic from Ranunculus macranthus (Large buttercup).